The primary structure comprises 294 residues: 4-hydroxy-tetrahydrodipicolinate synthase (294 aa).

Pyruvate is bound at residue T47. Catalysis depends on Y135, which acts as the Proton donor/acceptor. K164 (schiff-base intermediate with substrate) is an active-site residue. Pyruvate is bound at residue V206.

Belongs to the DapA family. As to quaternary structure, homotetramer; dimer of dimers.

The protein localises to the cytoplasm. The enzyme catalyses L-aspartate 4-semialdehyde + pyruvate = (2S,4S)-4-hydroxy-2,3,4,5-tetrahydrodipicolinate + H2O + H(+). The protein operates within amino-acid biosynthesis; L-lysine biosynthesis via DAP pathway; (S)-tetrahydrodipicolinate from L-aspartate: step 3/4. Functionally, catalyzes the condensation of (S)-aspartate-beta-semialdehyde [(S)-ASA] and pyruvate to 4-hydroxy-tetrahydrodipicolinate (HTPA). The sequence is that of 4-hydroxy-tetrahydrodipicolinate synthase from Lachnoclostridium phytofermentans (strain ATCC 700394 / DSM 18823 / ISDg) (Clostridium phytofermentans).